Reading from the N-terminus, the 558-residue chain is CTP synthase (558 aa).

The interval 1–266 is amidoligase domain; the sequence is MSAKYIFVTG…DRLVMKYLRL (266 aa). Position 14 (serine 14) interacts with CTP. Serine 14 lines the UTP pocket. Residues 15-20 and aspartate 72 each bind ATP; that span reads SLGKGL. 2 residues coordinate Mg(2+): aspartate 72 and glutamate 140. CTP contacts are provided by residues 147–149, 187–192, and lysine 223; these read DIE and KTKPTQ. Residues 187-192 and lysine 223 each bind UTP; that span reads KTKPTQ. An ATP-binding site is contributed by 239–241; it reads KDV. One can recognise a Glutamine amidotransferase type-1 domain in the interval 291-537; the sequence is IIGIIGKYVE…IGASYEHRMK (247 aa). L-glutamine is bound at residue glycine 355. Catalysis depends on cysteine 382, which acts as the Nucleophile; for glutamine hydrolysis. L-glutamine contacts are provided by residues 383 to 386, glutamate 406, and arginine 463; that span reads LGMQ. Active-site residues include histidine 510 and glutamate 512. A disordered region spans residues 539–558; that stretch reads THTKEREEESVFLRPERVGK. A compositionally biased stretch (basic and acidic residues) spans 542–558; sequence KEREEESVFLRPERVGK.

Belongs to the CTP synthase family. Homotetramer.

The catalysed reaction is UTP + L-glutamine + ATP + H2O = CTP + L-glutamate + ADP + phosphate + 2 H(+). It catalyses the reaction L-glutamine + H2O = L-glutamate + NH4(+). The enzyme catalyses UTP + NH4(+) + ATP = CTP + ADP + phosphate + 2 H(+). It participates in pyrimidine metabolism; CTP biosynthesis via de novo pathway; CTP from UDP: step 2/2. Its activity is regulated as follows. Allosterically activated by GTP, when glutamine is the substrate; GTP has no effect on the reaction when ammonia is the substrate. The allosteric effector GTP functions by stabilizing the protein conformation that binds the tetrahedral intermediate(s) formed during glutamine hydrolysis. Inhibited by the product CTP, via allosteric rather than competitive inhibition. Catalyzes the ATP-dependent amination of UTP to CTP with either L-glutamine or ammonia as the source of nitrogen. Regulates intracellular CTP levels through interactions with the four ribonucleotide triphosphates. This chain is CTP synthase, found in Koribacter versatilis (strain Ellin345).